The sequence spans 407 residues: Arginine deiminase (407 aa).

The Amidino-cysteine intermediate role is filled by Cys-397.

This sequence belongs to the arginine deiminase family.

The protein resides in the cytoplasm. It carries out the reaction L-arginine + H2O = L-citrulline + NH4(+). The protein operates within amino-acid degradation; L-arginine degradation via ADI pathway; carbamoyl phosphate from L-arginine: step 1/2. The chain is Arginine deiminase from Limosilactobacillus fermentum (strain NBRC 3956 / LMG 18251) (Lactobacillus fermentum).